The primary structure comprises 421 residues: Histidine--tRNA ligase (421 aa).

It belongs to the class-II aminoacyl-tRNA synthetase family. As to quaternary structure, homodimer.

The protein localises to the cytoplasm. The catalysed reaction is tRNA(His) + L-histidine + ATP = L-histidyl-tRNA(His) + AMP + diphosphate + H(+). The chain is Histidine--tRNA ligase from Francisella tularensis subsp. tularensis (strain SCHU S4 / Schu 4).